The chain runs to 1196 residues: Jouberin (1196 aa).

Residues 13-45 (KVRFEELLKTHSDLMREKKKLKKKLVRSEENIS) are a coiled coil. Residue S45 is modified to Phosphoserine. Disordered regions lie at residues 56-186 (MKET…EEDE), 215-242 (QLTYFPSDTLFHDDKLSSEKRKKKKEVP), and 254-327 (ISGD…HEIT). Over residues 80–91 (DDVSAANTNNLK) the composition is skewed to polar residues. Positions 92-101 (KSTRVTKNKL) are enriched in basic residues. A compositionally biased stretch (polar residues) spans 102–113 (RNTQLATENPNG). Composition is skewed to basic and acidic residues over residues 141–154 (LKPETPENKVDSTH), 166–179 (DHQKSEKANEGREE), and 224–233 (LFHDDKLSSE). The interaction with HAP1 stretch occupies residues 141–434 (LKPETPENKV…VFNENFPYLL (294 aa)). Positions 300 to 309 (KPKKTKKKTK) are enriched in basic residues. WD repeat units follow at residues 607–649 (AGER…FMRE), 652–691 (GHLNIIYDLSWSKDDHYILTSSSDGTARIWKNEINNTNTF), 695–735 (PHPS…DSAI), 742–781 (VHKSFINSLCFDTEGHHMYSGDCTGVIVVWNTYVKINDLE), 797–837 (EFKG…ARKF), 841–880 (ANYREKIHSTLTPCGTFLFAGSEDGIVYVWNPETGEQVAM), and 885–926 (PFKS…AQQE). At S1002 the chain carries Phosphoserine. The region spanning 1051–1111 (DTAPTVVALY…PANHVASETL (61 aa)) is the SH3 domain. The interval 1115–1196 (LPPEIKERSP…QAGRKVTLIE (82 aa)) is disordered. Composition is skewed to basic and acidic residues over residues 1117–1136 (PEIKERSPPLSPEEKTKIEK) and 1161–1182 (THSEMRKEQSHEDQGHIMDTRM). S1123 carries the phosphoserine modification.

Self-associates. Part of the tectonic-like complex (also named B9 complex). Interacts with MKS1. Interacts with NPHP1; probably as heterodimers and/or AHI1(2):NPHP1(2) heterotetramers. Interacts (via SH3 domain) with the dynamin GTPase DNM2. Interacts with HAP1; probably as AHI1(2):HAP1(2) heterotetramers. Interacts with RAB8A. Interacts with CEND1. Interacts with CTNNB1/beta-catenin. Interacts with SPATA7. As to expression, highly expressed in the most primitive normal hematopoietic cells. Expressed in brain, particularly in neurons that give rise to the crossing axons of the corticospinal tract and superior cerebellar peduncles. Expressed in kidney (renal collecting duct cells) (at protein level).

It localises to the cytoplasm. The protein localises to the cytoskeleton. It is found in the cilium basal body. The protein resides in the cell junction. Its subcellular location is the adherens junction. It localises to the microtubule organizing center. The protein localises to the centrosome. It is found in the centriole. Involved in vesicle trafficking and required for ciliogenesis, formation of primary non-motile cilium, and recruitment of RAB8A to the basal body of primary cilium. Component of the tectonic-like complex, a complex localized at the transition zone of primary cilia and acting as a barrier that prevents diffusion of transmembrane proteins between the cilia and plasma membranes. Involved in neuronal differentiation. As a positive modulator of classical Wnt signaling, may play a crucial role in ciliary signaling during cerebellum embryonic development. This chain is Jouberin (AHI1), found in Homo sapiens (Human).